The primary structure comprises 465 residues: Deoxyguanosinetriphosphate triphosphohydrolase-like protein (465 aa).

The tract at residues 1-22 (MKWDKLLNDKRRRESGVTRSKN) is disordered. The 190-residue stretch at 63-252 (RLTHSMEVST…LEVADDIAYL (190 aa)) folds into the HD domain.

This sequence belongs to the dGTPase family. Type 3 subfamily.

The protein is Deoxyguanosinetriphosphate triphosphohydrolase-like protein of Listeria monocytogenes serovar 1/2a (strain ATCC BAA-679 / EGD-e).